Consider the following 671-residue polypeptide: MKLIVLIFFLLFINLNYCLKIKEQPKVGGIDSEQPTNSFYIENGNFLMNNQGNGGSLNQYQIISGSFHYFRCLPELWVDRLTKMKACGLNTIQTYIPWNVHQPNGFNTELVATNDLIEFLRQAQQIGLNVILRPGPYSCAEWELGGFPYWILEQQPIALRSSDSVFISAVIAYWSRLLPLLEPLLFTNGGPIIMVQVENEYGSYGEDKSYLETLLTLLQKYLGQGDGNGSGVLFHSTDGPSAQMLFGSKLEGVYQTVDFGPMPIEQIQDNFKIQQTFASKPTPPMNSEYYTGWITNWGDASAARTDASVVAQGLDDILSLNASVNMYMFFGGSNAGFMNGANSNSPTTNFEITIQSYDYDSPLSESGDTTEKYFAIKNVIEKYIKPTTNSNSTLPPIPSNSTKVAYGTIQITQATSLFNNLANLVNSNQQQLQTGAPIPMEQLQQSTGFVLYETTMNIAQSSQLSITELHDRATIFINDEAIEDTQTIGQAVFLQRPFNSSIEITYPSNVTDDGNFNLRILLENQGRVNFGPYLNDRKGLLSGGVLSGQQYLGPWNNYPLPLTNKTLSNINNWEQIKDYTLSNTPTFYQATLSLNSTNDIGDTFLSFTGLGKGQLFVNGYNVGRYWNVGPQRTIYISSVLLHQGDNEIILFETLLTQPIFEIQFLNQPYFD.

The signal sequence occupies residues 1 to 18; it reads MKLIVLIFFLLFINLNYC. Glutamate 200 acts as the Proton donor in catalysis. Asparagine 228 is a glycosylation site (N-linked (GlcNAc...) asparagine). Glutamate 288 acts as the Nucleophile in catalysis. 7 N-linked (GlcNAc...) asparagine glycosylation sites follow: asparagine 321, asparagine 391, asparagine 400, asparagine 499, asparagine 509, asparagine 564, and asparagine 595.

It belongs to the glycosyl hydrolase 35 family.

The protein localises to the lysosome. It carries out the reaction Hydrolysis of terminal non-reducing beta-D-galactose residues in beta-D-galactosides.. Functionally, cleaves beta-linked terminal galactosyl residues from gangliosides, glycoproteins, and glycosaminoglycans. This chain is Beta-galactosidase 1 (glb1), found in Dictyostelium discoideum (Social amoeba).